The chain runs to 129 residues: Small ribosomal subunit protein uS11 (129 aa).

The protein belongs to the universal ribosomal protein uS11 family. In terms of assembly, part of the 30S ribosomal subunit. Interacts with proteins S7 and S18. Binds to IF-3.

Functionally, located on the platform of the 30S subunit, it bridges several disparate RNA helices of the 16S rRNA. Forms part of the Shine-Dalgarno cleft in the 70S ribosome. This chain is Small ribosomal subunit protein uS11, found in Methylobacillus flagellatus (strain ATCC 51484 / DSM 6875 / VKM B-1610 / KT).